The primary structure comprises 405 residues: NADH-quinone oxidoreductase subunit D (405 aa).

It belongs to the complex I 49 kDa subunit family. As to quaternary structure, NDH-1 is composed of 14 different subunits. Subunits NuoB, C, D, E, F, and G constitute the peripheral sector of the complex.

The protein localises to the cell inner membrane. The catalysed reaction is a quinone + NADH + 5 H(+)(in) = a quinol + NAD(+) + 4 H(+)(out). NDH-1 shuttles electrons from NADH, via FMN and iron-sulfur (Fe-S) centers, to quinones in the respiratory chain. The immediate electron acceptor for the enzyme in this species is believed to be ubiquinone. Couples the redox reaction to proton translocation (for every two electrons transferred, four hydrogen ions are translocated across the cytoplasmic membrane), and thus conserves the redox energy in a proton gradient. This chain is NADH-quinone oxidoreductase subunit D, found in Ruegeria pomeroyi (strain ATCC 700808 / DSM 15171 / DSS-3) (Silicibacter pomeroyi).